Consider the following 192-residue polypeptide: uncharacterized protein (192 aa).

Disordered regions lie at residues 1–37 (MASS…PAFP) and 146–192 (ARGP…EQNK). Composition is skewed to pro residues over residues 8 to 19 (TPSPAGLPPPSV) and 159 to 180 (APPP…PGWP).

This is an uncharacterized protein from Homo sapiens (Human).